The primary structure comprises 231 residues: Sensory transduction protein BceR (231 aa).

The Response regulatory domain occupies 3–116 (KLLLIEDDES…VLIAKIQAMF (114 aa)). Aspartate 52 carries the post-translational modification 4-aspartylphosphate. A DNA-binding region (ompR/PhoB-type) is located at residues 127–225 (STIKTWCGAA…KVGQGYIAKE (99 aa)).

Post-translationally, phosphorylated by BceS.

The protein localises to the cytoplasm. Functionally, member of the two-component regulatory system BceS/BceR involved in the regulation of bacitracin resistance. When activated by BceS, binds to the upstream region of the bceAB promoter and up-regulates the expression of these two genes. This Bacillus subtilis (strain 168) protein is Sensory transduction protein BceR (bceR).